Here is a 584-residue protein sequence, read N- to C-terminus: Putative adenine deaminase BA_3032/GBAA_3032/BAS2818 (584 aa).

The protein belongs to the metallo-dependent hydrolases superfamily. Adenine deaminase family.

The catalysed reaction is adenine + H2O + H(+) = hypoxanthine + NH4(+). The sequence is that of Putative adenine deaminase BA_3032/GBAA_3032/BAS2818 from Bacillus anthracis.